The primary structure comprises 228 residues: Eukaryotic translation initiation factor 4E-1 (228 aa).

The segment covering 1 to 19 (MATAEMEKTTTFDEAEKVK) has biased composition (basic and acidic residues). A disordered region spans residues 1–33 (MATAEMEKTTTFDEAEKVKLNANEADDEVEEGE). A compositionally biased stretch (acidic residues) spans 24–33 (EADDEVEEGE). 2 EIF4G-binding regions span residues 53-56 (HPLE) and 63-99 (FDNP…NNIH). MRNA contacts are provided by residues 71-76 (KQAAWG), lysine 103, and 121-122 (WE). A disulfide bridge connects residues cysteine 126 and cysteine 164. Residues 147–156 (YTLLAMIGHQ) are EIF4G-binding. Residues 171–176 (RGKGEK) and 216–220 (KRLDR) contribute to the mRNA site.

Belongs to the eukaryotic initiation factor 4E family. As to quaternary structure, EIF4F is a multi-subunit complex, the composition of which varies with external and internal environmental conditions. It is composed of at least EIF4A, EIF4E and EIF4G. EIF4E is also known to interact with other partners. In higher plants two isoforms of EIF4F have been identified, named isoform EIF4F and isoform EIF(iso)4F. Isoform EIF4F has subunits p220 and p26, whereas isoform EIF(iso)4F has subunits p82 and p28. (Microbial infection) Interacts with potyvirus viral genome-linked protein (VPg); this interaction is possible in susceptible hosts but is impaired in resistant plants. Thus the VPg of tobacco etch virus (TEV) strain HAT interacts with susceptible alleles pvr2(+), pvr2(3) and pvr2(9) but not with the resistant allele pvr2(2), the VPg of TEV strain CAA10 interacts with susceptible alleles pvr2(+), pvr2(2), pvr2(3) and pvr2(9), the VPg of potato virus Y (PVY) strain LYE84 interacts with tomato eIF4E1 and eIF4E2 as well as with the Capsicum annuum eIF4E1 susceptible allele pvr2(+) but not with resistant alleles pvr2(1), pvr2(2), pvr2(3), pvr2(4), pvr2(5), pvr2(6), pvr2(7), pvr2(8) and pvr2(9) and the VPg of PVY strain SON41 interacts with C.annuum eIF4E1 susceptible alleles pvr2(+), pvr2(1), pvr2(2), pvr2(3) and pvr2(4) but not with resistant alleles pvr2(5), pvr2(6), pvr2(7), pvr2(8) and pvr2(9). In addition, the susceptible allele pvr1(+) interacts strongly with TEV strains HAT and NW VPg while resistance alleles (pvr1, pvr1(1), and pvr1(2)) fail to bind TEV VPg. According to the redox status, the Cys-126-Cys-164 disulfide bridge may have a role in regulating protein function by affecting its ability to bind capped mRNA.

Its subcellular location is the nucleus. The protein localises to the cytoplasm. Component of the protein complex eIF4F, which is involved in the recognition of the mRNA cap, ATP-dependent unwinding of 5'-terminal secondary structure and recruitment of mRNA to the ribosome. Recognizes and binds the 7-methylguanosine-containing mRNA cap during an early step in the initiation of protein synthesis and facilitates ribosome binding by inducing the unwinding of the mRNAs secondary structures. Key component of recessive resistance to potyviruses. Its function is as follows. (Microbial infection) Susceptibility host factor required for viral infection (e.g. potato virus Y (PVY) and tobacco etch virus (TEV)) by recruiting viral RNAs to the host ribosomal complex via an interaction with viral genome-linked protein (VPg). In Capsicum annuum (Capsicum pepper), this protein is Eukaryotic translation initiation factor 4E-1.